Reading from the N-terminus, the 1090-residue chain is DNA damage-binding protein 1 (1090 aa).

Belongs to the DDB1 family. Component of the UV-DDB complex, which is composed of DDB1 and DDB2. Expressed in proliferating tissues. Highly expressed in shoot apical meristem (SAM). Expressed in roots, young leaves, flag leaves, and panicles. Not detected in mature leaves.

The protein localises to the nucleus. Required for DNA repair. Binds to DDB2 to form the UV-damaged DNA-binding protein complex (the UV-DDB complex). The UV-DDB complex may recognize UV-induced DNA damage and recruit proteins of the nucleotide excision repair pathway (the NER pathway) to initiate DNA repair. May function as the substrate recognition module for a DCX (DDB1-CUL4-X-box) E3 ubiquitin-protein ligase complex. The protein is DNA damage-binding protein 1 of Oryza sativa subsp. japonica (Rice).